The sequence spans 922 residues: Alpha-actinin, sarcomeric (922 aa).

The segment at 1–252 (MMENGGYVGQ…IMTYVSCYYH (252 aa)) is actin-binding. Calponin-homology (CH) domains lie at 36 to 140 (KQQK…LRFA) and 149 to 255 (MTAK…HAFQ). 4 Spectrin repeats span residues 253–393 (AFQG…MVSD), 394–508 (ITNS…RCQR), 509–629 (ICDQ…SADL), and 630–742 (ISRK…TMET). 2 EF-hand domains span residues 776 to 811 (EQLTEFRSSFNHFDKNRTGRLAPEEFKSCLVSLGYS) and 817 to 852 (QGDMDFQRILAVVDPNASGYVQFDAFLDFMTRESTD). Ca(2+) is bound by residues aspartate 789, asparagine 791, threonine 793, arginine 795, and glutamate 800.

The protein belongs to the alpha-actinin family. As to quaternary structure, homodimer; antiparallel.

In terms of biological role, F-actin cross-linking protein which is thought to anchor actin to a variety of intracellular structures. This is a bundling protein. This Anopheles gambiae (African malaria mosquito) protein is Alpha-actinin, sarcomeric (Actn).